The sequence spans 282 residues: sn-glycerol-3-phosphate transport system permease protein UgpE (282 aa).

6 helical membrane-spanning segments follow: residues 14-34 (LILI…FVAS), 86-106 (MAIA…IVFF), 112-132 (MFFF…RILP), 146-168 (YAGL…QFFL), 201-221 (IAAL…WPLL), and 248-268 (WNYV…VVVL). One can recognise an ABC transmembrane type-1 domain in the interval 78–269 (LWNSFVVAMA…IPPILVVVLM (192 aa)).

Belongs to the binding-protein-dependent transport system permease family. In terms of assembly, the complex is composed of two ATP-binding proteins (UgpC), two transmembrane proteins (UgpA and UgpE) and a solute-binding protein (UgpB).

The protein resides in the cell inner membrane. Part of the ABC transporter complex UgpBAEC involved in sn-glycerol-3-phosphate (G3P) import. Probably responsible for the translocation of the substrate across the membrane. This is sn-glycerol-3-phosphate transport system permease protein UgpE (ugpE) from Brucella melitensis biotype 1 (strain ATCC 23456 / CCUG 17765 / NCTC 10094 / 16M).